We begin with the raw amino-acid sequence, 248 residues long: ATP synthase subunit a, chloroplastic (248 aa).

5 helical membrane passes run 37-57, 96-116, 135-155, 200-220, and 221-241; these read AQVL…AFVT, VPFI…GALF, INTT…AGLH, LVVA…MMFL, and GLFT…AYIG.

Belongs to the ATPase A chain family. In terms of assembly, F-type ATPases have 2 components, CF(1) - the catalytic core - and CF(0) - the membrane proton channel. CF(1) has five subunits: alpha(3), beta(3), gamma(1), delta(1), epsilon(1). CF(0) has four main subunits: a, b, b' and c.

It is found in the plastid. Its subcellular location is the chloroplast thylakoid membrane. Its function is as follows. Key component of the proton channel; it plays a direct role in the translocation of protons across the membrane. The protein is ATP synthase subunit a, chloroplastic of Psilotum nudum (Whisk fern).